Consider the following 491-residue polypeptide: Limb region 1 homolog-like protein (491 aa).

Residues 1–20 (METEDVTVREQIFHDRVRET) are Extracellular-facing. Residues 21-41 (IICVLLFICLYILSHFILTHF) form a helical membrane-spanning segment. Residues 42-59 (KKSAEFVTDDIEDATVNK) are Cytoplasmic-facing. Residues 60–80 (IALWLCTFTLSVAVCAVLLLP) form a helical membrane-spanning segment. At 81–111 (ISILSNEVLLTFPHSYYMQWLNGSLIRGLWN) the chain is on the extracellular side. Residues 112 to 132 (LVFLFSNLSLVFLMPFAYFFT) form a helical membrane-spanning segment. Over 133-152 (ESEGFAGSKKGVMARVYETA) the chain is Cytoplasmic. Residues 153-173 (VMLLLLSLLVLGIVWVASALL) form a helical membrane-spanning segment. Residues 174-192 (HHNTARESLYDLWEYYLPY) are Extracellular-facing. A helical transmembrane segment spans residues 193-213 (LYSGISLFGVLLLLLCTPFGL). Over 214–292 (SRMFSVTGSL…RKRASPWQRN (79 aa)) the chain is Cytoplasmic. A helical transmembrane segment spans residues 293–313 (LVYPVAMLLLLALTAVSVLMV). The Extracellular segment spans residues 314 to 346 (CFHVLELLFDESAMPRGMEDPHLGLASFSMLGS). Residues 347 to 367 (LGAAVQVVIILYLMVSSVVGF) traverse the membrane as a helical segment. The Cytoplasmic portion of the chain corresponds to 368–384 (YSSPLFTGLLPRAQDTT). The chain crosses the membrane as a helical span at residues 385-405 (LTQIIGNCVSLLILSSALPVF). At 406–427 (SRTLGITKFDLLGDFGRHDWLG) the chain is on the extracellular side. A helical membrane pass occupies residues 428–448 (SFHIVFLYNMLFAGLTSACLI). Residues 449–491 (NTVTWALQRELIRAFGLHRLPLTVSRSTIPLKLLLANGLSKIH) are Cytoplasmic-facing.

It belongs to the LIMR family. As to quaternary structure, dimer. Can also form higher oligomers.

Its subcellular location is the cell membrane. The protein resides in the endoplasmic reticulum membrane. Its function is as follows. May play a role in lymphocyte development by negatively regulating the canonical Wnt signaling pathway. May act as a LCN1 receptor. This Danio rerio (Zebrafish) protein is Limb region 1 homolog-like protein (lmbr1l).